We begin with the raw amino-acid sequence, 627 residues long: Sodium- and chloride-dependent GABA transporter 3 (627 aa).

The disordered stretch occupies residues 1–36; sequence MTAEQALPLGNGKAAEEARGSEALGGGGGGAAGTRE. Over 1-53 the chain is Cytoplasmic; sequence MTAEQALPLGNGKAAEEARGSEALGGGGGGAAGTREARDKAVHERGHWNNKVE. S21 bears the Phosphoserine mark. The segment covering 23-32 has biased composition (gly residues); sequence ALGGGGGGAA. The next 3 helical transmembrane spans lie at 54–74, 82–101, and 126–146; these read FVLS…FPYL, AFLI…VFFL, and GIGY…IIIL. Topologically, residues 147–220 are extracellular; the sequence is AWAIFYLSNC…DGIEHIGNLR (74 aa). 3 N-linked (GlcNAc...) asparagine glycosylation sites follow: N182, N185, and N193. 9 helical membrane passes run 221–239, 248–265, 301–318, 330–351, 384–403, 433–451, 468–488, 509–528, and 548–566; these read WELA…FCIW, VVYV…ILLI, IFFS…LGSY, IMLC…FSVL, MPLS…FLGL, LLIL…VMLT, GMCL…VYGS, WCWK…FFLV, and IGWL…WIFI. Topologically, residues 567–627 are cytoplasmic; it reads KLWKTEGTLP…SAITEKETHF (61 aa).

Belongs to the sodium:neurotransmitter symporter (SNF) (TC 2.A.22) family. SLC6A11 subfamily. As to expression, brain and retina. Expressed predominantly within neurons. Expressed in the hippocampus (at protein level).

Its subcellular location is the cell membrane. It catalyses the reaction 4-aminobutanoate(out) + chloride(out) + 2 Na(+)(out) = 4-aminobutanoate(in) + chloride(in) + 2 Na(+)(in). The enzyme catalyses taurine(out) + chloride(out) + 2 Na(+)(out) = taurine(in) + chloride(in) + 2 Na(+)(in). It carries out the reaction beta-alanine(out) + chloride(out) + 2 Na(+)(out) = beta-alanine(in) + chloride(in) + 2 Na(+)(in). The catalysed reaction is hypotaurine(out) + chloride(out) + 2 Na(+)(out) = hypotaurine(in) + chloride(in) + 2 Na(+)(in). With respect to regulation, GABA transport is inhibited by beta-alanine. In terms of biological role, mediates sodium- and chloride-dependent transport of gamma-aminobutyric acid (GABA). Can also mediate transport of beta-alanine and to a lower extent that of taurine and hypotaurine. In Rattus norvegicus (Rat), this protein is Sodium- and chloride-dependent GABA transporter 3 (Slc6a11).